The sequence spans 309 residues: Sulfate adenylyltransferase subunit 2 (309 aa).

This sequence belongs to the PAPS reductase family. CysD subfamily. In terms of assembly, heterodimer composed of CysD, the smaller subunit, and CysN.

It catalyses the reaction sulfate + ATP + H(+) = adenosine 5'-phosphosulfate + diphosphate. Its pathway is sulfur metabolism; hydrogen sulfide biosynthesis; sulfite from sulfate: step 1/3. Its function is as follows. With CysN forms the ATP sulfurylase (ATPS) that catalyzes the adenylation of sulfate producing adenosine 5'-phosphosulfate (APS) and diphosphate, the first enzymatic step in sulfur assimilation pathway. APS synthesis involves the formation of a high-energy phosphoric-sulfuric acid anhydride bond driven by GTP hydrolysis by CysN coupled to ATP hydrolysis by CysD. In Aeromonas salmonicida (strain A449), this protein is Sulfate adenylyltransferase subunit 2.